A 2147-amino-acid chain; its full sequence is Non-reducing polyketide synthase albA (2147 aa).

The interval 8-244 (YLFGDQTSDI…VKAPIHGPYH (237 aa)) is N-terminal acylcarrier protein transacylase domain (SAT). One can recognise a Ketosynthase family 3 (KS3) domain in the interval 375–806 (CSKIAIIGMS…GGNTAILLED (432 aa)). Catalysis depends on for beta-ketoacyl synthase activity residues Cys-547, His-682, and His-724. A malonyl-CoA:ACP transacylase (MAT) domain region spans residues 912-1232 (FVFTGQGAQY…LSSLHLAGID (321 aa)). Ser-1001 (for acyl/malonyl transferase activity) is an active-site residue. Positions 1286–1425 (HEFLTTAAQK…CTVRFFDCAA (140 aa)) are N-terminal hotdog fold. The region spanning 1286–1598 (HEFLTTAAQK…FQGLSRKILD (313 aa)) is the PKS/mFAS DH domain. Positions 1290 to 1603 (TTAAQKVIET…RKILDTVLPP (314 aa)) are product template (PT) domain. His-1326 functions as the Proton acceptor; for dehydratase activity in the catalytic mechanism. Residues 1452–1598 (DAHRLGRGMV…FQGLSRKILD (147 aa)) form a C-terminal hotdog fold region. Asp-1511 serves as the catalytic Proton donor; for dehydratase activity. The interval 1608–1637 (KGPARPAASAQKAAPAATSKSRASAPAPAK) is disordered. Over residues 1610-1637 (PARPAASAQKAAPAATSKSRASAPAPAK) the composition is skewed to low complexity. The region spanning 1642–1719 (PSAPSLVKRA…DFKQFLAPMS (78 aa)) is the Carrier 1 domain. Ser-1679 carries the O-(pantetheine 4'-phosphoryl)serine modification. The disordered stretch occupies residues 1719–1759 (SQGEASDGSTSDPESSSSFNGGSSTDESSAGSPVSSPPNEK). The segment covering 1724–1747 (SDGSTSDPESSSSFNGGSSTDESS) has biased composition (low complexity). Residues 1760-1837 (IEQHATMKEI…DVEDALGLKP (78 aa)) form the Carrier 2 domain. O-(pantetheine 4'-phosphoryl)serine is present on Ser-1797. The segment at 1873–2145 (SPHPRSTSIL…ELGSFIGNAM (273 aa)) is claisen cyclase domain. Ser-1963 functions as the For Claisen cyclase activity in the catalytic mechanism.

It catalyses the reaction 6 malonyl-CoA + acetyl-CoA + 6 H(+) = naphtopyrone YWA1 + 6 CO2 + 7 CoA + H2O. The protein operates within secondary metabolite biosynthesis. Non-reducing polyketide synthase involved in the biosynthesis of bifonsecin B, a dimeric gamma-naphthopyrone. The first step in the biosynthesis of bifonsecin B is the production of gamma-naphthopyrone precursor YWA1 by the non-reducing polyketide synthase albA, via condensation of one acetyl-CoA starter unit with 6 malonyl-CoA units. YWA1 is then methylated by bfoE at position C-6 to yield foncesin which is further methylated at position C-8 by bfoD to produce fonsecin B. A key enzyme in the biosynthetic pathway is the cytochrome P450 monooxygenase bfoB which catalyzes the oxidative dimerization of fonsecin B to bifonsecin B. Bfob also catalyzes the oxidative dimerization of rubrofusarin B into nigerone. The stereoselectivity of bfoB is influenced by the two natural monomeric substrates; homodimerization of fonsecin B yields a stereochemically pure biaryl, M-foncerine B, while rubrofusarin B yields a mixture of enantiomers M- and P-nigerone. This chain is Non-reducing polyketide synthase albA, found in Aspergillus brasiliensis (strain CBS 101740 / IMI 381727 / IBT 21946).